The chain runs to 89 residues: Small ribosomal subunit protein uS15 (89 aa).

Belongs to the universal ribosomal protein uS15 family. Part of the 30S ribosomal subunit. Forms a bridge to the 50S subunit in the 70S ribosome, contacting the 23S rRNA.

Its function is as follows. One of the primary rRNA binding proteins, it binds directly to 16S rRNA where it helps nucleate assembly of the platform of the 30S subunit by binding and bridging several RNA helices of the 16S rRNA. Functionally, forms an intersubunit bridge (bridge B4) with the 23S rRNA of the 50S subunit in the ribosome. This chain is Small ribosomal subunit protein uS15, found in Thermobifida fusca (strain YX).